The chain runs to 361 residues: [LysW]-lysine hydrolase (361 aa).

A Zn(2+)-binding site is contributed by His67. Asp69 is a catalytic residue. Asp91 contributes to the Zn(2+) binding site. Catalysis depends on Glu124, which acts as the Proton acceptor. The Zn(2+) site is built by Glu125, Glu148, and His326.

It belongs to the peptidase M20A family. LysK subfamily. Requires Zn(2+) as cofactor. Co(2+) serves as cofactor.

The protein resides in the cytoplasm. The catalysed reaction is [amino-group carrier protein]-C-terminal-gamma-(L-lysyl)-L-glutamate + H2O = [amino-group carrier protein]-C-terminal-L-glutamate + L-lysine. Its pathway is amino-acid biosynthesis; L-lysine biosynthesis via AAA pathway; L-lysine from L-alpha-aminoadipate (Thermus route): step 5/5. Catalyzes the release of L-lysine from [LysW]-gamma-L-lysine. This chain is [LysW]-lysine hydrolase, found in Thermus thermophilus (strain ATCC 27634 / DSM 579 / HB8).